A 188-amino-acid polypeptide reads, in one-letter code: dCTP deaminase (188 aa).

DCTP is bound at residue 109–114; the sequence is KSTYAR. Glutamate 135 acts as the Proton donor/acceptor in catalysis. Positions 154, 168, and 178 each coordinate dCTP.

It belongs to the dCTP deaminase family. In terms of assembly, homotrimer.

It carries out the reaction dCTP + H2O + H(+) = dUTP + NH4(+). It participates in pyrimidine metabolism; dUMP biosynthesis; dUMP from dCTP (dUTP route): step 1/2. Its function is as follows. Catalyzes the deamination of dCTP to dUTP. The sequence is that of dCTP deaminase from Helicobacter pylori (strain P12).